Reading from the N-terminus, the 273-residue chain is Dermonecrotic toxin LdSicTox-alphaIB1aiv (273 aa).

Residue His5 is part of the active site. 2 residues coordinate Mg(2+): Glu25 and Asp27. The Nucleophile role is filled by His41. 2 disulfide bridges follow: Cys45–Cys51 and Cys47–Cys190. Asp85 lines the Mg(2+) pocket. N-linked (GlcNAc...) asparagine glycosylation occurs at Asn250.

This sequence belongs to the arthropod phospholipase D family. Class II subfamily. Mg(2+) is required as a cofactor. As to expression, expressed by the venom gland.

The protein resides in the secreted. It carries out the reaction an N-(acyl)-sphingosylphosphocholine = an N-(acyl)-sphingosyl-1,3-cyclic phosphate + choline. The catalysed reaction is an N-(acyl)-sphingosylphosphoethanolamine = an N-(acyl)-sphingosyl-1,3-cyclic phosphate + ethanolamine. The enzyme catalyses a 1-acyl-sn-glycero-3-phosphocholine = a 1-acyl-sn-glycero-2,3-cyclic phosphate + choline. It catalyses the reaction a 1-acyl-sn-glycero-3-phosphoethanolamine = a 1-acyl-sn-glycero-2,3-cyclic phosphate + ethanolamine. In terms of biological role, dermonecrotic toxins cleave the phosphodiester linkage between the phosphate and headgroup of certain phospholipids (sphingolipid and lysolipid substrates), forming an alcohol (often choline) and a cyclic phosphate. This toxin acts on sphingomyelin (SM). It may also act on ceramide phosphoethanolamine (CPE), lysophosphatidylcholine (LPC) and lysophosphatidylethanolamine (LPE), but not on lysophosphatidylserine (LPS), and lysophosphatidylglycerol (LPG). It acts by transphosphatidylation, releasing exclusively cyclic phosphate products as second products. Induces dermonecrosis, hemolysis, increased vascular permeability, edema, inflammatory response, and platelet aggregation. The sequence is that of Dermonecrotic toxin LdSicTox-alphaIB1aiv from Loxosceles deserta (Desert recluse spider).